A 461-amino-acid polypeptide reads, in one-letter code: Cysteine--tRNA ligase (461 aa).

Residue cysteine 28 coordinates Zn(2+). The 'HIGH' region signature appears at 30–40; the sequence is ITIYDLCHIGH. The Zn(2+) site is built by cysteine 209, histidine 234, and glutamate 238. Residues 266–270 carry the 'KMSKS' region motif; sequence KMSKS. Position 269 (lysine 269) interacts with ATP.

This sequence belongs to the class-I aminoacyl-tRNA synthetase family. Monomer. Zn(2+) serves as cofactor.

The protein resides in the cytoplasm. It carries out the reaction tRNA(Cys) + L-cysteine + ATP = L-cysteinyl-tRNA(Cys) + AMP + diphosphate. This Yersinia enterocolitica serotype O:8 / biotype 1B (strain NCTC 13174 / 8081) protein is Cysteine--tRNA ligase.